The chain runs to 1291 residues: Histone-lysine N-methyltransferase SETDB1 (1291 aa).

Residues 18–64 adopt a coiled-coil conformation; the sequence is ESEEIAELQQAVVEELGISMEELRHFIDEELEKMDCVQQRKKQLAEL. The interval 108–147 is disordered; it reads RDSSSEDESSRPTEIIEIPDEDDDVLSIDSGDAGSRTPKD. Residues Ser112 and Ser117 each carry the phosphoserine modification. Thr120 is modified (phosphothreonine). Positions 124–133 are enriched in acidic residues; that stretch reads EIPDEDDDVL. Lys182 is covalently cross-linked (Glycyl lysine isopeptide (Lys-Gly) (interchain with G-Cter in SUMO2); alternate). Residue Lys182 forms a Glycyl lysine isopeptide (Lys-Gly) (interchain with G-Cter in ubiquitin); alternate linkage. Tudor domains follow at residues 257–320 and 347–403; these read KLYV…LKKT and LLKS…SMKT. A disordered region spans residues 404-545; that stretch reads SSASALEKKQ…APAPSALPAP (142 aa). Residues 433-444 are compositionally biased toward polar residues; it reads QYTQDLTGTGTQ. Positions 448-468 are enriched in pro residues; the sequence is VEPPQPTAPPAPPFPPAPPLS. Polar residues predominate over residues 477-515; it reads ESQLAQSRKQVAKKSTSFRPGSVGSGHSSPTSPALSENV. Low complexity predominate over residues 528-539; it reads SPLGSTASAPAP. The MBD domain occupies 594-665; it reads YRGKNPLLVP…EMFCLDPYVL (72 aa). The region spanning 727-800 is the Pre-SET domain; the sequence is VGCDCKDGCR…MCTNRLVQHG (74 aa). Zn(2+) contacts are provided by Cys729, Cys731, Cys735, Cys741, Cys743, Cys781, Cys785, Cys787, and Cys792. The region spanning 803–1266 is the SET domain; it reads VRLQLFKTQN…AGTELTWDYN (464 aa). S-adenosyl-L-methionine contacts are provided by residues 813–815, Asp851, and Tyr853; that span reads KGW. A Glycyl lysine isopeptide (Lys-Gly) (interchain with G-Cter in ubiquitin) cross-link involves residue Lys867. Residues 868–1160 are disordered; the sequence is EGYESDAPCS…MTGPMKRQVA (293 aa). Over residues 896–907 the composition is skewed to acidic residues; the sequence is EDPEESNDDSSD. The segment covering 951–963 has biased composition (pro residues); it reads DLGPPHIPVPPSI. Ser1025 carries the post-translational modification Phosphoserine. Positions 1031-1050 are enriched in basic and acidic residues; the sequence is IKDEGDIKQAKKEDTDDRNK. Lys1032 participates in a covalent cross-link: Glycyl lysine isopeptide (Lys-Gly) (interchain with G-Cter in SUMO2); alternate. Lys1032 is covalently cross-linked (Glycyl lysine isopeptide (Lys-Gly) (interchain with G-Cter in SUMO1); alternate). A Glycyl lysine isopeptide (Lys-Gly) (interchain with G-Cter in SUMO2) cross-link involves residue Lys1038. A compositionally biased stretch (polar residues) spans 1052–1063; that stretch reads SVVTESSRNYGY. At Ser1066 the chain carries Phosphoserine. Residue Lys1069 forms a Glycyl lysine isopeptide (Lys-Gly) (interchain with G-Cter in SUMO2) linkage. Residues 1100–1115 are compositionally biased toward low complexity; it reads LTLSSSTESEGESGTS. Residues 1116–1140 are compositionally biased toward polar residues; it reads RKPTAGQTSATAVDSDDIQTISSGS. Lys1149 participates in a covalent cross-link: Glycyl lysine isopeptide (Lys-Gly) (interchain with G-Cter in SUMO2). N6,N6,N6-trimethyllysine; alternate is present on residues Lys1170 and Lys1178. 2 positions are modified to N6,N6-dimethyllysine; alternate: Lys1170 and Lys1178. S-adenosyl-L-methionine contacts are provided by residues Arg1220 and 1223 to 1224; that span reads NH. The Zn(2+) site is built by Cys1226, Cys1279, Cys1281, and Cys1286. Residues 1275–1291 enclose the Post-SET domain; the sequence is KELLCCCGAIECRGRLL.

The protein belongs to the class V-like SAM-binding methyltransferase superfamily. Histone-lysine methyltransferase family. Suvar3-9 subfamily. As to quaternary structure, part of a complex containing at least CDYL, REST, WIZ, SETDB1, EHMT1 and EHMT2. Forms a complex with ATRX, TRIM28 and ZNF274. Probably part of a corepressor complex containing ZNF304, TRIM28, SETDB1 and DNMT1. Interacts with TRIM28/TIF1B. Interacts with ATF7IP and ATF7IP2; the interaction with ATF7IP protects SETDB1 from proteasomal degradation and is required to stimulate histone methyltransferase activity and facilitate the conversion of dimethylated to trimethylated H3 'Lys-9'. Interacts with CBX1 and CBX5. Interacts with DNMT3A and DNMT3B. Interacts with SUMO2. Interacts with MPHOSPH8. Interacts with ERG. Interacts with HDAC1, HDAC2, SIN3A and SIN3B. Interacts with ATRX. Interacts with RESF1. Interacts with ZNF638. Interacts with TASOR. Interacts with ZNF263; recruited to the SIX3 promoter along with other proteins involved in chromatin modification and transcriptional corepression where it contributes to transcriptional repression. Interacts with PHF13; the interaction probably enhances SETDB1 chromatin-associated levels and activity. Interacts with VRK1. Post-translationally, degraded by the proteasome, shielded by interaction with ATF7IP. Monoubiquitinated at Lys-867 by E2 enzymes of the UBE2E family. The conjugated-Ub is protected from deubiquitination by the SET domain. Monoubiquitination at Lys-867 is required for catalytic activity, H3K9 methylation and endogenous retrovirus silencing. In terms of tissue distribution, widely expressed. High expression in testis.

The protein resides in the nucleus. It is found in the cytoplasm. The protein localises to the chromosome. The catalysed reaction is N(6),N(6)-dimethyl-L-lysyl(9)-[histone H3] + S-adenosyl-L-methionine = N(6),N(6),N(6)-trimethyl-L-lysyl(9)-[histone H3] + S-adenosyl-L-homocysteine + H(+). In terms of biological role, histone methyltransferase that specifically trimethylates 'Lys-9' of histone H3. H3 'Lys-9' trimethylation represents a specific tag for epigenetic transcriptional repression by recruiting HP1 (CBX1, CBX3 and/or CBX5) proteins to methylated histones. Mainly functions in euchromatin regions, thereby playing a central role in the silencing of euchromatic genes. H3 'Lys-9' trimethylation is coordinated with DNA methylation. Required for HUSH-mediated heterochromatin formation and gene silencing. Forms a complex with MBD1 and ATF7IP that represses transcription and couples DNA methylation and histone 'Lys-9' trimethylation. Its activity is dependent on MBD1 and is heritably maintained through DNA replication by being recruited by CAF-1. SETDB1 is targeted to histone H3 by TRIM28/TIF1B, a factor recruited by KRAB zinc-finger proteins. Probably forms a corepressor complex required for activated KRAS-mediated promoter hypermethylation and transcriptional silencing of tumor suppressor genes (TSGs) or other tumor-related genes in colorectal cancer (CRC) cells. Required to maintain a transcriptionally repressive state of genes in undifferentiated embryonic stem cells (ESCs). In ESCs, in collaboration with TRIM28, is also required for H3K9me3 and silencing of endogenous and introduced retroviruses in a DNA-methylation independent-pathway. Associates at promoter regions of tumor suppressor genes (TSGs) leading to their gene silencing. The SETDB1-TRIM28-ZNF274 complex may play a role in recruiting ATRX to the 3'-exons of zinc-finger coding genes with atypical chromatin signatures to establish or maintain/protect H3K9me3 at these transcriptionally active regions. In Homo sapiens (Human), this protein is Histone-lysine N-methyltransferase SETDB1.